The chain runs to 612 residues: MENQLAKSIEERTFQYQDSLPPLPVPSLEESLKKYLESVKPFANEDEYKKTEEIVQKFQDGVGKTLHQKLLERAKGKRNWLEEWWLNVAYLDVRIPSQLNVNFVGPSPHFEHYWPAREGTQLERGSILLWHNLNYWQLLRREKLPVHKSGNTPLDMNQFRMLFSTCKVPGITRDSIMNYFKTESEGHCPTHIAVLCRGRAFVFDVLHDGCLITPPELLRQLTYIYQKCWNEPVGPSIAALTSEERTRWAKAREYLIGLDPENLTLLEKIQSSLFVYSIEDTSPHATPENFSQVFEMLLGGDPAVRWGDKSYNLISFANGIFGCSCDHAPYDAMLMVNIAHYVDEKLLETEGRWKGSEKVRDIPLPEELAFTVDEKILNDVYQAKAQHLKAASDLQIAASTFTSFGKKLTKKEALHPDTFIQLALQLAYYRLHGRPGCCYETAMTRYFYHGRTETVRSCTVEAVRWCQSMQDPSASLLERQQKMLDAFAKHNKMMRDCSHGKGFDRHLLGLLLIAKEEGLPVPELFEDPLFSRSGGGGNFVLSTSLVGYLRIQGVVVPMVHNGYGFFYHIRDDRFVVTCSSWRSCLETDAEKLVEMIFHAFHDMIHLMNTAHL.

The residue at position 1 (M1) is an N-acetylmethionine. An N6-succinyllysine mark is found at K40 and K57. The active-site Proton acceptor is the H327. CoA contacts are provided by residues K406 and 410-417 (KKEALHPD). K406 is subject to N6-acetyllysine; alternate. K406 is subject to N6-succinyllysine; alternate. Residues Y439, T441, and T452 each coordinate (R)-carnitine. The Microbody targeting signal motif lies at 610–612 (AHL).

Belongs to the carnitine/choline acetyltransferase family. Liver.

Its subcellular location is the peroxisome. It catalyses the reaction octanoyl-CoA + (R)-carnitine = O-octanoyl-(R)-carnitine + CoA. The catalysed reaction is 4,8-dimethylnonanoyl-CoA + (R)-carnitine = O-4,8-dimethylnonanoyl-(R)-carnitine + CoA. Its pathway is lipid metabolism; fatty acid beta-oxidation. Functionally, beta-oxidation of fatty acids. The highest activity concerns the C6 to C10 chain length substrate. This chain is Peroxisomal carnitine O-octanoyltransferase (Crot), found in Rattus norvegicus (Rat).